The sequence spans 639 residues: MHGLLLAAGLLSLPLRALGHPNPNPQMHTLSRRGAVDLDAFRLGQNAEYSNTASVASNPPALSIRSTQSYVDVAKDLVKTTLPDATFRVVNDHYVGTNGVAHVHLRQTVHGIDVDNADFNVNVKDGKVFSFGNSFYKGKIPEENPMVKRDHADPVKALKGVVSALKLPVKTEKASAAISAQSQGQDAVVFKGTSGALSDPKGELVYLIKPDGELSLTWKVETDVGDNWLLSYIDAKDGKNIHGVVDYVADATYQVYPWGINDPTEGEREVFTDPWDGNASEFTWISDGRTRYPTTRGNNGIAQDNPSGGNQYENNYRPMSDDLRFEYPYSTDMSPPDSYIDASITQLFYTANVYHDLLYILGFTERAGNFEYNNNNQGGRGNDYVILNSQDGSGTNNANFATPPDGQPGRMRMYTWTTSRPNRDGSFEAGIVIHEYTHGLSNRLCGGPSNSRCLNALESGGMGEGWGDFMATAIRLKAGDTRETDYTMGEWAANQQGGIRQHPYSTNLQTNPLVYTTVNQYREVHDIGTVWASMLYEVLWNLIDKHGKNDGPKPELRDGVPTDGKYLTMKLVIDGMALQPCNPNFVQARDAILDADEALTGGENKCEIWAGFAKRELGTGARYDRSRRTGSTDVPQECQ.

Positions 1 to 19 are cleaved as a signal peptide; sequence MHGLLLAAGLLSLPLRALG. Residues 20 to 250 constitute a propeptide that is removed on maturation; sequence HPNPNPQMHT…IHGVVDYVAD (231 aa). A glycan (N-linked (GlcNAc...) asparagine) is linked at Asn-278. Residues 293 to 312 are disordered; it reads PTTRGNNGIAQDNPSGGNQY. His-434 is a Zn(2+) binding site. The active site involves Glu-435. His-438 lines the Zn(2+) pocket.

The protein belongs to the peptidase M36 family. Zn(2+) is required as a cofactor.

It localises to the secreted. Functionally, secreted metalloproteinase that allows assimilation of proteinaceous substrates and probably acts as a virulence factor. This is Extracellular metalloproteinase 9 (MEP9) from Coccidioides posadasii (strain C735) (Valley fever fungus).